A 120-amino-acid polypeptide reads, in one-letter code: U13-lycotoxin-Ls1a (120 aa).

The first 16 residues, 1–16, serve as a signal peptide directing secretion; that stretch reads MKILFVLISILHAVYC. The propeptide occupies 17 to 54; sequence FSSEEDVDSAYLANELEPVEDINSEQYAALEPKEEHER. Cystine bridges form between C56-C70, C63-C76, C69-C87, and C78-C85. The region spanning 56 to 95 is the Agouti domain; that stretch reads CADMGQDCKDDCDCCLNIATCNCWFGRYFCSCTFGDYQTC.

The protein belongs to the neurotoxin 05 (agouti) family. Post-translationally, contains 6 disulfide bonds. Expressed by the venom gland.

Its subcellular location is the secreted. The chain is U13-lycotoxin-Ls1a from Lycosa singoriensis (Wolf spider).